Here is a 476-residue protein sequence, read N- to C-terminus: mRNA cap guanine-N(7) methyltransferase (476 aa).

Positions 1-14 are enriched in basic and acidic residues; sequence MANSAKAEEYEKMS. The segment at 1–146 is disordered; the sequence is MANSAKAEEY…KQKNLEEGHS (146 aa). Residues 20–50 show a composition bias toward polar residues; the sequence is ASVNSETESSFNINENTTASGTGLSEKTSVC. Residues S24, S28, and S29 each carry the phosphoserine modification. 2 stretches are compositionally biased toward basic and acidic residues: residues 54-68 and 84-118; these read DIAR…DLVK and LDPE…DKSS. S118 is modified (phosphoserine). Residues 126–128 carry the Nuclear localization signal motif; sequence KRK. Residues 129 to 145 are compositionally biased toward basic and acidic residues; the sequence is IALEDVPEKQKNLEEGH. An mRNA cap 0 methyltransferase domain is found at 167–475; it reads SRIFYLRNFN…IYLVFAFEKQ (309 aa). Residue 176-177 participates in mRNA binding; it reads NN. S-adenosyl-L-methionine is bound by residues K180, G205, D227, D261, Q284, and Y289.

Belongs to the class I-like SAM-binding methyltransferase superfamily. mRNA cap 0 methyltransferase family. As to quaternary structure, interacts with importin alpha, leading to stimulate both RNA-binding and methyltransferase activity. Interaction with importin alpha and beta is required for its nuclear localization, importin beta dissociating in response to RanGTP, allowing RNMT-importin alpha to bind RNA substrates. Interacts with elongating form of polymerase II and RNGTT. Interacts with RAMAC, this interaction significantly enhances RNA-binding and cap methyltransferase activity. As to expression, widely expressed.

The protein resides in the nucleus. It catalyses the reaction a 5'-end (5'-triphosphoguanosine)-ribonucleoside in mRNA + S-adenosyl-L-methionine = a 5'-end (N(7)-methyl 5'-triphosphoguanosine)-ribonucleoside in mRNA + S-adenosyl-L-homocysteine. Methyltransferase activity is activated by RAMAC. Functionally, catalytic subunit of the mRNA-capping methyltransferase RNMT:RAMAC complex that methylates the N7 position of the added guanosine to the 5'-cap structure of mRNAs. Binds RNA containing 5'-terminal GpppC. This chain is mRNA cap guanine-N(7) methyltransferase (RNMT), found in Homo sapiens (Human).